The primary structure comprises 141 residues: NADPH-dependent 7-cyano-7-deazaguanine reductase (141 aa).

Cys-34 functions as the Thioimide intermediate in the catalytic mechanism. Residue Asp-41 is the Proton donor of the active site. Residues 56 to 58 (VEL) and 75 to 76 (HE) each bind substrate.

The protein belongs to the GTP cyclohydrolase I family. QueF type 1 subfamily.

The protein localises to the cytoplasm. It catalyses the reaction 7-aminomethyl-7-carbaguanine + 2 NADP(+) = 7-cyano-7-deazaguanine + 2 NADPH + 3 H(+). The protein operates within tRNA modification; tRNA-queuosine biosynthesis. Catalyzes the NADPH-dependent reduction of 7-cyano-7-deazaguanine (preQ0) to 7-aminomethyl-7-deazaguanine (preQ1). The sequence is that of NADPH-dependent 7-cyano-7-deazaguanine reductase from Acidithiobacillus ferrooxidans (strain ATCC 23270 / DSM 14882 / CIP 104768 / NCIMB 8455) (Ferrobacillus ferrooxidans (strain ATCC 23270)).